The chain runs to 40 residues: MSAGSGRIPLWVVATIAGLGVITVVGIFFYGAYAGIGSSI.

The chain crosses the membrane as a helical span at residues 8 to 28; sequence IPLWVVATIAGLGVITVVGIF.

This sequence belongs to the PsbJ family. As to quaternary structure, PSII is composed of 1 copy each of membrane proteins PsbA, PsbB, PsbC, PsbD, PsbE, PsbF, PsbH, PsbI, PsbJ, PsbK, PsbL, PsbM, PsbT, PsbX, PsbY, PsbZ, Psb30/Ycf12, peripheral proteins PsbO, CyanoQ (PsbQ), PsbU, PsbV and a large number of cofactors. It forms dimeric complexes.

Its subcellular location is the cellular thylakoid membrane. Its function is as follows. One of the components of the core complex of photosystem II (PSII). PSII is a light-driven water:plastoquinone oxidoreductase that uses light energy to abstract electrons from H(2)O, generating O(2) and a proton gradient subsequently used for ATP formation. It consists of a core antenna complex that captures photons, and an electron transfer chain that converts photonic excitation into a charge separation. In Nostoc sp. (strain PCC 7120 / SAG 25.82 / UTEX 2576), this protein is Photosystem II reaction center protein J.